Consider the following 199-residue polypeptide: CASP-like protein 1D2 (199 aa).

Residues 1–27 (MASTENPDPETGKSEPIPASATPPPSS) are disordered. Alanine 2 carries the N-acetylalanine modification. At 2 to 36 (ASTENPDPETGKSEPIPASATPPPSSAASFLDCRK) the chain is on the cytoplasmic side. A helical transmembrane segment spans residues 37–57 (IDIITRVLLFSATLTALIVMV). The Extracellular segment spans residues 58 to 85 (TSDQTEMTQLPGVSSPAPVSAEFNDSPA). The chain crosses the membrane as a helical span at residues 86-106 (FIYFVVALVVASFYALISTLV). Residues 107–129 (SISLLLKPEFTAQFSIYLASLDM) lie on the Cytoplasmic side of the membrane. A helical membrane pass occupies residues 130 to 150 (VMLGILASATGTAGGVAYIAL). Over 151–171 (KGNEEVGWNKICNVYDKFCRY) the chain is Extracellular. The chain crosses the membrane as a helical span at residues 172–192 (IATSLALSLFASLLLLVLSIW). Residues 193–199 (SALSKRT) lie on the Cytoplasmic side of the membrane.

The protein belongs to the Casparian strip membrane proteins (CASP) family. In terms of assembly, homodimer and heterodimers. In terms of tissue distribution, expressed in the root endodermis and flowers.

The protein resides in the cell membrane. The sequence is that of CASP-like protein 1D2 from Arabidopsis thaliana (Mouse-ear cress).